We begin with the raw amino-acid sequence, 186 residues long: Signal peptidase complex catalytic subunit SEC11 (186 aa).

Topologically, residues 1-20 (MDALGLSKLRHLKPRQLLSQ) are cytoplasmic. A helical; Signal-anchor for type II membrane protein membrane pass occupies residues 21–41 (VLNFALILSTAFMLWKGLSVA). The Lumenal segment spans residues 42 to 186 (TDSPSPIVVV…MGLLVIVQRE (145 aa)). Residues Ser55, His102, and Asp128 each act as charge relay system in the active site. Positions 172–183 (ALLGIMGLLVIV) are C-terminal short (CTS) helix.

This sequence belongs to the peptidase S26B family. In terms of assembly, component of the signal peptidase complex (SPC) composed of a catalytic subunit SEC11 and three accessory subunits SPC1, SPC2 and SPC3. The complex induces a local thinning of the ER membrane which is used to measure the length of the signal peptide (SP) h-region of protein substrates. This ensures the selectivity of the complex towards h-regions shorter than 18-20 amino acids. SPC associates with the translocon complex.

Its subcellular location is the endoplasmic reticulum membrane. The catalysed reaction is Cleavage of hydrophobic, N-terminal signal or leader sequences from secreted and periplasmic proteins.. Catalytic component of the signal peptidase complex (SPC) which catalyzes the cleavage of N-terminal signal sequences from nascent proteins as they are translocated into the lumen of the endoplasmic reticulum. Specifically cleaves N-terminal signal peptides that contain a hydrophobic alpha-helix (h-region) shorter than 18-20 amino acids. In Tuber melanosporum (strain Mel28) (Perigord black truffle), this protein is Signal peptidase complex catalytic subunit SEC11 (SEC11).